A 257-amino-acid chain; its full sequence is Triosephosphate isomerase (257 aa).

9–11 (NWK) serves as a coordination point for substrate. Residue His-97 is the Electrophile of the active site. Glu-169 serves as the catalytic Proton acceptor. Substrate-binding positions include Gly-175, Ser-214, and 235–236 (GG).

It belongs to the triosephosphate isomerase family. In terms of assembly, homodimer.

Its subcellular location is the cytoplasm. It catalyses the reaction D-glyceraldehyde 3-phosphate = dihydroxyacetone phosphate. It functions in the pathway carbohydrate biosynthesis; gluconeogenesis. It participates in carbohydrate degradation; glycolysis; D-glyceraldehyde 3-phosphate from glycerone phosphate: step 1/1. Functionally, involved in the gluconeogenesis. Catalyzes stereospecifically the conversion of dihydroxyacetone phosphate (DHAP) to D-glyceraldehyde-3-phosphate (G3P). The protein is Triosephosphate isomerase of Vibrio cholerae serotype O1 (strain ATCC 39315 / El Tor Inaba N16961).